The primary structure comprises 396 residues: Pyruvate dehydrogenase E1 component subunit alpha type I, mitochondrial (396 aa).

Residues 1-25 (MIFVFANIFKVPTVSPSVMAISVRL) constitute a mitochondrion transit peptide. Residues H88, Y114, R115, G153, G161, V163, D192, G193, A194, N221, and Y223 each contribute to the pyruvate site. Y114 and R115 together coordinate thiamine diphosphate. Positions 161, 163, 192, 193, 194, and 221 each coordinate thiamine diphosphate. D192 is a Mg(2+) binding site. Mg(2+) contacts are provided by N221 and Y223. H288 is a thiamine diphosphate binding site. Phosphoserine is present on residues S289 and S296.

Heterotetramer of two PDHA1 and two PDHB subunits. The heterotetramer interacts with DLAT, and is part of the multimeric pyruvate dehydrogenase complex that contains multiple copies of pyruvate dehydrogenase (E1), dihydrolipoamide acetyltransferase (DLAT, E2) and lipoamide dehydrogenase (DLD, E3). Thiamine diphosphate serves as cofactor. It depends on Mg(2+) as a cofactor.

The protein resides in the mitochondrion matrix. The catalysed reaction is N(6)-[(R)-lipoyl]-L-lysyl-[protein] + pyruvate + H(+) = N(6)-[(R)-S(8)-acetyldihydrolipoyl]-L-lysyl-[protein] + CO2. Its activity is regulated as follows. Pyruvate dehydrogenase activity is inhibited by phosphorylation of PDHA1; it is reactivated by dephosphorylation. Functionally, the pyruvate dehydrogenase complex catalyzes the overall conversion of pyruvate to acetyl-CoA and CO(2), and thereby links the glycolytic pathway to the tricarboxylic cycle. The protein is Pyruvate dehydrogenase E1 component subunit alpha type I, mitochondrial of Ascaris suum (Pig roundworm).